A 75-amino-acid polypeptide reads, in one-letter code: uncharacterized protein (75 aa).

2 consecutive transmembrane segments (helical) span residues 5 to 25 (VIICLLFTYYVIWSLLPIFEI) and 42 to 62 (VAIFLPIFLLLIGFTLTGSVL).

Its subcellular location is the membrane. This is an uncharacterized protein from Saccharomyces cerevisiae (strain ATCC 204508 / S288c) (Baker's yeast).